The primary structure comprises 442 residues: Adenylosuccinate synthetase (442 aa).

Residues 25 to 31 (GDEGKGK), 53 to 55 (GHT), and Lys-62 contribute to the GTP site. The Proton acceptor role is filled by Asp-26. The Mg(2+) site is built by Asp-26 and Gly-53. IMP is bound by residues 26 to 29 (DEGK) and 51 to 54 (NAGH). The active-site Proton donor is His-54. 4 residues coordinate IMP: Thr-141, Arg-155, Asn-232, and Thr-247. Thr-307 contacts GTP. A substrate-binding site is contributed by 307–313 (TTTKRPR). Residue Arg-311 participates in IMP binding. GTP is bound by residues Arg-313, 339 to 341 (KLD), and 425 to 427 (GVG).

It belongs to the adenylosuccinate synthetase family. Homodimer. It depends on Mg(2+) as a cofactor.

The protein localises to the cytoplasm. It carries out the reaction IMP + L-aspartate + GTP = N(6)-(1,2-dicarboxyethyl)-AMP + GDP + phosphate + 2 H(+). Its pathway is purine metabolism; AMP biosynthesis via de novo pathway; AMP from IMP: step 1/2. Plays an important role in the salvage pathway for purine nucleotide biosynthesis. Catalyzes the first committed step in the biosynthesis of AMP from IMP. The polypeptide is Adenylosuccinate synthetase (Adss) (Plasmodium falciparum (isolate 3D7)).